The primary structure comprises 367 residues: Cobalt-precorrin-5B C(1)-methyltransferase (367 aa).

Belongs to the CbiD family.

It catalyses the reaction Co-precorrin-5B + S-adenosyl-L-methionine = Co-precorrin-6A + S-adenosyl-L-homocysteine. The protein operates within cofactor biosynthesis; adenosylcobalamin biosynthesis; cob(II)yrinate a,c-diamide from sirohydrochlorin (anaerobic route): step 6/10. Catalyzes the methylation of C-1 in cobalt-precorrin-5B to form cobalt-precorrin-6A. The polypeptide is Cobalt-precorrin-5B C(1)-methyltransferase (Leptospira interrogans serogroup Icterohaemorrhagiae serovar Lai (strain 56601)).